The following is a 360-amino-acid chain: Phenylalanine--tRNA ligase alpha subunit (360 aa).

Residue Glu260 participates in Mg(2+) binding.

It belongs to the class-II aminoacyl-tRNA synthetase family. Phe-tRNA synthetase alpha subunit type 1 subfamily. As to quaternary structure, tetramer of two alpha and two beta subunits. Mg(2+) serves as cofactor.

The protein localises to the cytoplasm. The enzyme catalyses tRNA(Phe) + L-phenylalanine + ATP = L-phenylalanyl-tRNA(Phe) + AMP + diphosphate + H(+). This chain is Phenylalanine--tRNA ligase alpha subunit, found in Bradyrhizobium diazoefficiens (strain JCM 10833 / BCRC 13528 / IAM 13628 / NBRC 14792 / USDA 110).